An 807-amino-acid chain; its full sequence is Glycerol-3-phosphate acyltransferase (807 aa).

Residues 305–310 (CHRSHM) carry the HXXXXD motif motif.

This sequence belongs to the GPAT/DAPAT family.

The protein resides in the cell inner membrane. The catalysed reaction is sn-glycerol 3-phosphate + an acyl-CoA = a 1-acyl-sn-glycero-3-phosphate + CoA. The protein operates within phospholipid metabolism; CDP-diacylglycerol biosynthesis; CDP-diacylglycerol from sn-glycerol 3-phosphate: step 1/3. In Klebsiella pneumoniae subsp. pneumoniae (strain ATCC 700721 / MGH 78578), this protein is Glycerol-3-phosphate acyltransferase.